The chain runs to 435 residues: Ribosomal protein uS12 methylthiotransferase RimO (435 aa).

Positions 3 to 113 constitute an MTTase N-terminal domain; the sequence is HKVGFVSLGC…VVNAVHQHLP (111 aa). Residues cysteine 12, cysteine 48, cysteine 77, cysteine 144, cysteine 148, and cysteine 151 each contribute to the [4Fe-4S] cluster site. One can recognise a Radical SAM core domain in the interval 130–367; it reads LTPRHYAYLK…MQVQAEISRN (238 aa). A TRAM domain is found at 370–435; sequence KNKIGSTQTV…DDYDLYASLV (66 aa).

This sequence belongs to the methylthiotransferase family. RimO subfamily. [4Fe-4S] cluster is required as a cofactor.

Its subcellular location is the cytoplasm. It carries out the reaction L-aspartate(89)-[ribosomal protein uS12]-hydrogen + (sulfur carrier)-SH + AH2 + 2 S-adenosyl-L-methionine = 3-methylsulfanyl-L-aspartate(89)-[ribosomal protein uS12]-hydrogen + (sulfur carrier)-H + 5'-deoxyadenosine + L-methionine + A + S-adenosyl-L-homocysteine + 2 H(+). In terms of biological role, catalyzes the methylthiolation of an aspartic acid residue of ribosomal protein uS12. This Legionella pneumophila (strain Lens) protein is Ribosomal protein uS12 methylthiotransferase RimO.